Consider the following 296-residue polypeptide: MSPLANRRFLKMHGAGNAIVVLDLRGTAVRVTPAEARAIAADVHSRFDQLMVVHDPVTPGTDAFMRIYNTDGSESGACGNGTRCVGYALLDDPAMARPAENGALTLETKAGLVAVKRITERSFTVDMGQPRLRWDEIPLTEPFLDTRRIELQVGPIDDPILHSPAAVSMGNPHAIFFVERDPDSYDLGRIGPLLEAHPIFPERANISIAEVTSRDTIKLRVWERGAGLTLACGTAACATVVAASRLRMIGRAARVALPGGELSIEWRADDHVLMTGPVYLEGEGTFSPDLFAGIDG.

Positions 17, 49, and 69 each coordinate substrate. C78 acts as the Proton donor in catalysis. Substrate is bound by residues G79–N80, N171, N205, and E223–R224. The Proton acceptor role is filled by C232. G233–T234 lines the substrate pocket.

It belongs to the diaminopimelate epimerase family. Homodimer.

It localises to the cytoplasm. It catalyses the reaction (2S,6S)-2,6-diaminopimelate = meso-2,6-diaminopimelate. It functions in the pathway amino-acid biosynthesis; L-lysine biosynthesis via DAP pathway; DL-2,6-diaminopimelate from LL-2,6-diaminopimelate: step 1/1. Functionally, catalyzes the stereoinversion of LL-2,6-diaminopimelate (L,L-DAP) to meso-diaminopimelate (meso-DAP), a precursor of L-lysine and an essential component of the bacterial peptidoglycan. The polypeptide is Diaminopimelate epimerase (Methylorubrum extorquens (strain CM4 / NCIMB 13688) (Methylobacterium extorquens)).